The chain runs to 256 residues: Trans-aconitate 2-methyltransferase (256 aa).

Belongs to the methyltransferase superfamily. Tam family.

It is found in the cytoplasm. The catalysed reaction is trans-aconitate + S-adenosyl-L-methionine = (E)-3-(methoxycarbonyl)pent-2-enedioate + S-adenosyl-L-homocysteine. Catalyzes the S-adenosylmethionine monomethyl esterification of trans-aconitate. This Rhizobium etli (strain ATCC 51251 / DSM 11541 / JCM 21823 / NBRC 15573 / CFN 42) protein is Trans-aconitate 2-methyltransferase.